A 94-amino-acid polypeptide reads, in one-letter code: Late cornified envelope-like proline-rich protein 1 (94 aa).

2 disordered regions span residues 1–26 (MSSDDKSKSNDPKTEPKNCDPKCEQK) and 47–94 (CPRE…PPPE). The segment covering 53-94 (PAPPKCPPCPSPSPSSCPPKPCAKPCPPKCPSSCPPPCPPPE) has biased composition (pro residues).

The protein belongs to the cornifin (SPRR) family.

In Macaca fascicularis (Crab-eating macaque), this protein is Late cornified envelope-like proline-rich protein 1 (LELP1).